The sequence spans 906 residues: Eukaryotic translation initiation factor 4 gamma 2 (906 aa).

Residue Met1 is modified to N-acetylmethionine. The disordered stretch occupies residues 1-71; that stretch reads MESAIAEGGA…SAANNSANEK (71 aa). Ser11 carries the post-translational modification Phosphoserine. Residues 78–308 form the MIF4G domain; the sequence is FRKVRGILNK…QDTVELREHH (231 aa). Residue Thr89 is modified to Phosphothreonine. Omega-N-methylarginine is present on Arg359. The residue at position 394 (Ser394) is a Phosphoserine. Lys430 bears the N6-methyllysine mark. Residue Ser442 is modified to Phosphoserine. Residues 497–540 form a disordered region; it reads PPSAQPPRTQTPPLGQTPQLGLKTNPPLIQEKPAKTSKKPPPSK. Positions 502–515 are enriched in polar residues; the sequence is PPRTQTPPLGQTPQ. An Omega-N-methylarginine modification is found at Arg504. Thr507 and Thr513 each carry phosphothreonine. The 124-residue stretch at 542-665 folds into the MI domain; sequence ELLKLTEAVV…SISELAQPLE (124 aa). A Glycyl lysine isopeptide (Lys-Gly) (interchain with G-Cter in SUMO2) cross-link involves residue Lys574. The W2 domain maps to 719–903; sequence EGKGLSFLFP…ETAEEEESEE (185 aa). Position 901 is a phosphoserine (Ser901).

The protein belongs to the eukaryotic initiation factor 4G family. In terms of assembly, interacts with the serine/threonine protein kinases MKNK1 and MKNK2. Binds EIF4A and EIF3. Interacts with MIF4GD. Interacts with DAZAP2. Post-translationally, phosphorylation; hyperphosphorylated during mitosis. Ubiquitously expressed in all tissues examined.

Functionally, appears to play a role in the switch from cap-dependent to IRES-mediated translation during mitosis, apoptosis and viral infection. Cleaved by some caspases and viral proteases. This is Eukaryotic translation initiation factor 4 gamma 2 from Mus musculus (Mouse).